The following is a 268-amino-acid chain: Sexual development regulator velC (268 aa).

The segment covering 1–13 has biased composition (basic and acidic residues); the sequence is MPHGFDKLLHPEP. 2 disordered regions span residues 1-124 and 142-165; these read MPHG…DNFS and DPDP…NPPH. Pro residues predominate over residues 14 to 26; that stretch reads EPQSPSPPPPPRR. The Velvet domain maps to 28–257; that stretch reads STQSRYHLHI…ELGFVELKTR (230 aa). The span at 92–121 shows a compositional bias: basic and acidic residues; it reads DGNRDREREREHERERERERETDGVARTDD.

This sequence belongs to the velvet family. VelC subfamily. As to quaternary structure, interacts with velA and vosA.

The protein resides in the nucleus. Velvet-domain-containing protein that acts as a positive regulator of sexual development. This is Sexual development regulator velC from Penicillium rubens (strain ATCC 28089 / DSM 1075 / NRRL 1951 / Wisconsin 54-1255) (Penicillium chrysogenum).